We begin with the raw amino-acid sequence, 248 residues long: Small ribosomal subunit protein uS2c (248 aa).

This sequence belongs to the universal ribosomal protein uS2 family.

It localises to the plastid. It is found in the chloroplast. This Trachelium caeruleum (Blue throatwort) protein is Small ribosomal subunit protein uS2c (rps2).